The following is a 633-amino-acid chain: Micronuclear linker histone polyprotein (633 aa).

DNA-binding regions (HMG box) lie at residues 12–74 (PPKK…LFHY) and 96–164 (PKKP…KKWN). A disordered region spans residues 170–633 (AAQKKQTKRK…AYGKKANKKQ (464 aa)). The span at 174–190 (KQTKRKNSTSKSRRSSS) shows a compositional bias: basic residues. Composition is skewed to low complexity over residues 212 to 224 (SSASQGRSQSSSS) and 253 to 271 (NSTSNKRNSSSSSKRSSSS). Composition is skewed to basic residues over residues 272–309 (KNKKSSSSKNKKSSSSKGRKSSSSRGRKASSSKNRKSS) and 330–352 (SNKRKASSSRGRKSSSSKGRKSS). Basic and acidic residues-rich tracts occupy residues 353–374 (KSQERKNSHADTSKQMEDEGQK) and 382–401 (AKRDESSKKSRRNSMKEART). The span at 406 to 416 (NKSASKASKSG) shows a compositional bias: low complexity. Residues 417–444 (SKSKGKSASKSKGKSSSKGKNSKSRSAS) show a composition bias toward basic residues. The span at 446 to 469 (PKSNAAQNSNNTHQTADSSENASS) shows a compositional bias: polar residues. Over residues 478–491 (RQREQKDMVNEKSN) the composition is skewed to basic and acidic residues. The segment covering 496–524 (SKGKKNSKSNTRSKSKSKSASKSRKNASK) has biased composition (basic residues). 2 stretches are compositionally biased toward basic and acidic residues: residues 540 to 550 (SRSESKSKSEA) and 559 to 612 (EVIE…EDSK).

In terms of processing, all four histones are processed from the precursor molecule. Post-translationally, phosphorylated in growing and dividing cells but not in nongrowing (starved) cells. The N-terminus of MIC LH-alpha and MIC LH-delta is blocked.

It localises to the nucleus. The protein localises to the chromosome. This chain is Micronuclear linker histone polyprotein (MLH), found in Tetrahymena thermophila (strain SB210).